Here is a 237-residue protein sequence, read N- to C-terminus: DNA repair protein RecO (237 aa).

Belongs to the RecO family.

Functionally, involved in DNA repair and RecF pathway recombination. The polypeptide is DNA repair protein RecO (Cereibacter sphaeroides (strain ATCC 17025 / ATH 2.4.3) (Rhodobacter sphaeroides)).